A 599-amino-acid polypeptide reads, in one-letter code: Serine/threonine-protein kinase haspin homolog (599 aa).

One can recognise a Protein kinase domain in the interval 287 to 599; the sequence is PESIVKIGEG…FSDMLMDQIS (313 aa). Residues 293–301, K310, 407–412, 448–453, and 486–488 contribute to the ATP site; these read IGEGTYGEA, EHGGKD, DLHWGN, and DFT. Residue D448 is the Proton acceptor of the active site.

This sequence belongs to the protein kinase superfamily. Ser/Thr protein kinase family. Haspin subfamily. As to expression, expressed in meristems and primordia of root tips, lateral roots, shoot apex, leaves and flowers.

Its subcellular location is the cytoplasm. It localises to the perinuclear region. It is found in the nucleus. The protein localises to the chromosome. The protein resides in the cytoskeleton. Its subcellular location is the phragmoplast. The enzyme catalyses L-seryl-[protein] + ATP = O-phospho-L-seryl-[protein] + ADP + H(+). It carries out the reaction L-threonyl-[protein] + ATP = O-phospho-L-threonyl-[protein] + ADP + H(+). Threonine-protein kinase that phosphorylates histone H3 in vitro at 'Thr-3' (H3T3ph) and 'Thr-11' (H3T11ph), but not at 'Ser-10' (H3S10ph) or 'Ser-28' (H3S28ph). Plays a role in mitotic cell division during plant growth. Threonine-protein kinase that phosphorylates histone H3 in vitro at 'Thr-3' (H3T3ph), but not at 'Thr-11' (H3T11ph), 'Ser-10' (H3S10ph) or 'Ser-28' (H3S28ph). Involved in histone H3 phosphorylation in mitotic cells. Contributes to organ and plant development, as well as embryonic patterning. The sequence is that of Serine/threonine-protein kinase haspin homolog from Arabidopsis thaliana (Mouse-ear cress).